Here is a 360-residue protein sequence, read N- to C-terminus: MSQKNPEYAADHDHTREEMQNLQVAPASSDVEEPCSSSHLMASSLKGHTSEETQVPEDMEEPCSSSQLLTASNQEDPAYETPSTSRGLQHPYVSSSESAKGLGNKEMQGNSVIPPDQPDLPVMTIDGKVNFLVNYMLYKYQVKEMMSMNDIMTLIVREDEHHFHEILMRASERMEMVFGLEVREVDPVNHFYALFIKLGLTYDGMRADEYSFPKTGLLILILGVVFMKGNRATEEEIWEVLNPMGIYAGMNHFIFGDPRELLTDDFVREQYLAYQPIANSDPIQYEYVWGPRAKAETSKMKVLEFVAKVHGSDPTVFPSQYEEALIEEEERTLAMILEQAGPSSASGESSSDMGSNVPHI.

Residues 1–118 form a disordered region; that stretch reads MSQKNPEYAA…GNSVIPPDQP (118 aa). Positions 9 to 19 are enriched in basic and acidic residues; it reads AADHDHTREEM. Polar residues predominate over residues 63–98; sequence CSSSQLLTASNQEDPAYETPSTSRGLQHPYVSSSES. Residues 125 to 324 form the MAGE domain; that stretch reads IDGKVNFLVN…TVFPSQYEEA (200 aa). Residues 340–360 form a disordered region; it reads AGPSSASGESSSDMGSNVPHI. The segment covering 341 to 360 has biased composition (low complexity); that stretch reads GPSSASGESSSDMGSNVPHI.

This chain is Melanoma-associated antigen B16 (Mageb16), found in Rattus norvegicus (Rat).